The primary structure comprises 313 residues: Lactamase-like protein ptaB (313 aa).

Zn(2+) contacts are provided by His104, His106, Asp108, and His109. Asp108 acts as the Proton donor/acceptor in catalysis.

It belongs to the metallo-beta-lactamase superfamily. Requires Zn(2+) as cofactor.

The enzyme catalyses atrochrysone carboxyl-[ACP] + H2O = atrochrysone carboxylate + holo-[ACP] + H(+). It participates in secondary metabolite biosynthesis. Functionally, lactamase-like protein; part of the gene cluster that mediates the biosynthesis of pestheic acid, a diphenyl ether which is a biosynthetic precursor of the unique chloropupukeananes. The biosynthesis initiates from condensation of acetate and malonate units catalyzed by the non-reducing PKS ptaA. As the ptaA protein is TE/CLC domain-deficient, hydrolysis and Claisen cyclization of the polyketide could be catalyzed by ptaB containing a beta-lactamase domain. The ptaB protein might hydrolyze the thioester bond between the ACP of ptaA and the intermediate to release atrochrysone carboxylic acid, which is spontaneously dehydrated to form endocrocin anthrone. Endocrocin anthrone is then converted to endocrocin, catalyzed by the anthrone oxygenase ptaC. Spontaneous decarboxylation of endocrocin occurs to generate emodin. An O-methyltransferase (ptaH or ptaI) could methylate emodin to form physcion. PtaJ could then catalyze the oxidative cleavage of physcion, and rotation of the intermediate could then afford desmethylisosulochrin. PtaF, a putative NADH-dependent oxidoreductase, might also participate in the oxidative cleavage step. Desmethylisosulochrin is then transformed by another O-methyltransferase (ptaH or ptaI) to form isosulochrin. Chlorination of isosulochrin by ptaM in the cyclohexadienone B ring then produces chloroisosulochrin. PtaE is responsible for the oxidative coupling reactions of both benzophenones isosulochrin and chloroisosulochrin to RES-1214-1 and pestheic acid respectively, regardless of chlorination. This is Lactamase-like protein ptaB from Pestalotiopsis fici (strain W106-1 / CGMCC3.15140).